The primary structure comprises 868 residues: Translation initiation factor IF-2 (868 aa).

Composition is skewed to basic and acidic residues over residues 156-166 (ETVKEEEKINS) and 199-209 (SKKEEVKPEKV). Disordered regions lie at residues 156–177 (ETVKEEEKINSEENTAESQDEL) and 199–269 (SKKE…KYRE). Over residues 249-260 (RGGRSKFKKKKG) the composition is skewed to basic residues. Residues 368 to 537 (GRAPVVTIMG…LLQSEVLELK (170 aa)) enclose the tr-type G domain. The G1 stretch occupies residues 377–384 (GHVDHGKT). 377-384 (GHVDHGKT) lines the GTP pocket. Residues 402–406 (GITQH) are G2. Residues 423-426 (DTPG) are G3. GTP is bound by residues 423-427 (DTPGH) and 477-480 (NKMD). The tract at residues 477–480 (NKMD) is G4. Positions 513-515 (SAK) are G5.

Belongs to the TRAFAC class translation factor GTPase superfamily. Classic translation factor GTPase family. IF-2 subfamily.

It localises to the cytoplasm. One of the essential components for the initiation of protein synthesis. Protects formylmethionyl-tRNA from spontaneous hydrolysis and promotes its binding to the 30S ribosomal subunits. Also involved in the hydrolysis of GTP during the formation of the 70S ribosomal complex. In Legionella pneumophila subsp. pneumophila (strain Philadelphia 1 / ATCC 33152 / DSM 7513), this protein is Translation initiation factor IF-2.